The chain runs to 40 residues: Large ribosomal subunit protein bL36A (40 aa).

It belongs to the bacterial ribosomal protein bL36 family.

This is Large ribosomal subunit protein bL36A from Saccharopolyspora erythraea (strain ATCC 11635 / DSM 40517 / JCM 4748 / NBRC 13426 / NCIMB 8594 / NRRL 2338).